The sequence spans 209 residues: Inorganic pyrophosphatase (209 aa).

Substrate contacts are provided by lysine 38, arginine 52, and tyrosine 64. Mg(2+) is bound by residues aspartate 92, aspartate 97, and aspartate 130. Tyrosine 167 contributes to the substrate binding site.

This sequence belongs to the PPase family. Homohexamer. It depends on Mg(2+) as a cofactor.

It is found in the cytoplasm. The enzyme catalyses diphosphate + H2O = 2 phosphate + H(+). Its function is as follows. Catalyzes the hydrolysis of inorganic pyrophosphate (PPi) forming two phosphate ions. This is Inorganic pyrophosphatase from Chlamydia trachomatis serovar L2 (strain ATCC VR-902B / DSM 19102 / 434/Bu).